We begin with the raw amino-acid sequence, 76 residues long: Small ribosomal subunit protein bS18 (76 aa).

It belongs to the bacterial ribosomal protein bS18 family. As to quaternary structure, part of the 30S ribosomal subunit. Forms a tight heterodimer with protein bS6.

In terms of biological role, binds as a heterodimer with protein bS6 to the central domain of the 16S rRNA, where it helps stabilize the platform of the 30S subunit. In Neisseria gonorrhoeae (strain ATCC 700825 / FA 1090), this protein is Small ribosomal subunit protein bS18.